Consider the following 825-residue polypeptide: MDLVDPSQSAAAAAGTQLVKDEVAEKCQKLFQDFLEEFRGSDGELKYQSDAEELIRPERNTLLVSFVDLEQFNQQLATTIQEEFYRVYPYLCRAVKAFARDHGNIPQNKEFYVAFQELPTRHKIRELTTPRIGSLLRISGQVVRTHPVHPELVSGTFLCLDCQTLVRDVEQQFKYTQPSICRNPVCANRKRFMLDTNKSRFVDFQKVRIQETQAELPRGSIPRSVEVILRAEAVESCQAGDRCDFTGSLIVVPDISQLSTPGVRAETSSRVGGREGYEAEGVQGLRALGVRDLSYKLVFLACYVCPTNPRFGGKDLHEEDMTAESIKNQMSVKEWEKVFEMSQDKNLYHNLCTSLFPTVHGNDEVKRGILLMLFGGVPKSTMEGTSLRGDINVCVVGDPSTAKSQFLKHVEEFSPRAVYTSGKASTAAGLTAAVVRDEESHEFVIEAGALMLADNGVCCIDEFDKMDTKDQVAIHEAMEQQTISITKAGVKATLNARTSILAAANPVGGRYDRAKSLKQNVNLSAPIMSRFDLFFILVDECNEVTDYAIARRIVDLHSRIEESIDRVYTLDEVRRYLLFARQFKPKISKESEDFIVEQYKRLRQRDGSGVTKSAWRITVRQLESMIRLSEGMARMHCSDEVQPKHVKEAFRLLNKSIIRVETPDVNLDQEDEHEVEEPQEGINGDADVPNGVNGHINGINGHAEETNAAPPKPSLRLNFAEYKRISNLLVLQLRKIEDEDDENETSQRKSELINWYLKEIESEIDSEEELVNRKQIIDKVIHRLVHYDQILIELIQTGLKGTEDENVAKEEDPYLVVNPNYILED.

The C4-type zinc-finger motif lies at 159 to 186; the sequence is CLDCQTLVRDVEQQFKYTQPSICRNPVC. In terms of domain architecture, MCM spans 347–554; sequence LYHNLCTSLF…TDYAIARRIV (208 aa). 397-404 contributes to the ATP binding site; sequence GDPSTAKS. The short motif at 529–532 is the Arginine finger element; the sequence is SRFD. Residues 668–679 are compositionally biased toward acidic residues; that stretch reads DQEDEHEVEEPQ. Residues 668 to 690 are disordered; sequence DQEDEHEVEEPQEGINGDADVPN.

The protein belongs to the MCM family. Component of the mcm2-7 complex (RLF-M). The complex forms a toroidal hexameric ring with the proposed subunit order mcm2-mcm6-mcm4-mcm7-mcm3-mcm5 (By simililarity). Begins to associate with zmcm3, mcm4 and mcm7 into mcm complexes at the neurula stage.

Its subcellular location is the nucleus. The catalysed reaction is ATP + H2O = ADP + phosphate + H(+). Functionally, acts as a component of the mcm2-7 complex (mcm complex) which is the putative replicative helicase essential for 'once per cell cycle' DNA replication initiation and elongation in eukaryotic cells. The active ATPase sites in the mcm2-7 ring are formed through the interaction surfaces of two neighboring subunits such that a critical structure of a conserved arginine finger motif is provided in trans relative to the ATP-binding site of the Walker A box of the adjacent subunit. The six ATPase active sites, however, are likely to contribute differentially to the complex helicase activity. The existence of maternal and zygotic forms of mcm3 and mcm6 suggests that specific forms of mcm2-7 complexes may be used during different stages of development. May replace mmcm6 in the mcm2-7 complex. The polypeptide is Zygotic DNA replication licensing factor mcm6-B (zmcm6-b) (Xenopus laevis (African clawed frog)).